We begin with the raw amino-acid sequence, 184 residues long: MEILLLAFALAMDSVALSIASGAKCRTLSFLQVLKTALIFGVFQALMPFLGYILGLSFVNFIQEIDHFIAFGILGFLGAKMILEAHHTKDEPCLINLSSKDLALGAVATSIDALAVGITFSFANVDVTYSCLIIGTVCFVLCTAACYVGKILGAWLEAKALVLGGLILIGLGTKILITHLVDHI.

5 consecutive transmembrane segments (helical) span residues 39–59 (IFGV…LSFV), 65–85 (IDHF…ILEA), 102–122 (LALG…TFSF), 132–152 (LIIG…GKIL), and 161–181 (LVLG…THLV).

It belongs to the MntP (TC 9.B.29) family.

Its subcellular location is the cell inner membrane. Probably functions as a manganese efflux pump. This Campylobacter curvus (strain 525.92) protein is Putative manganese efflux pump MntP.